The primary structure comprises 1538 residues: Pentafunctional AROM polypeptide (1538 aa).

Residues 1 to 384 form a 3-dehydroquinate synthase region; the sequence is MGVPTKISIL…HEPRASTVSN (384 aa). Residues 44–46, 81–84, 114–116, and D119 each bind NAD(+); these read DTN, ESSK, and GGV. R130 is a binding site for 7-phospho-2-dehydro-3-deoxy-D-arabino-heptonate. Residue 139-140 coordinates NAD(+); that stretch reads TT. Residues D146 and K152 each contribute to the 7-phospho-2-dehydro-3-deoxy-D-arabino-heptonate site. K161 provides a ligand contact to NAD(+). 7-phospho-2-dehydro-3-deoxy-D-arabino-heptonate is bound at residue N162. NAD(+) contacts are provided by residues 179-182 and N190; that span reads FLNT. E194 contributes to the Zn(2+) binding site. Residues 194 to 197 and K250 contribute to the 7-phospho-2-dehydro-3-deoxy-D-arabino-heptonate site; that span reads EVIK. The active-site Proton acceptor; for 3-dehydroquinate synthase activity is E260. 7-phospho-2-dehydro-3-deoxy-D-arabino-heptonate-binding positions include 264 to 268 and H271; that span reads RNLLN. H271 contacts Zn(2+). H275 functions as the Proton acceptor; for 3-dehydroquinate synthase activity in the catalytic mechanism. Residues H287 and K356 each coordinate 7-phospho-2-dehydro-3-deoxy-D-arabino-heptonate. H287 is a binding site for Zn(2+). The interval 397-842 is EPSP synthase; the sequence is VSPGVPKGLD…WDCLSQTFKV (446 aa). The active-site For EPSP synthase activity is C824. The segment at 866–973 is shikimate kinase; sequence ASIFIIGMRG…RRKQNTFFVS (108 aa). 872 to 879 serves as a coordination point for ATP; the sequence is GMRGAGKT. Residues 974–1194 form a 3-dehydroquinase region; it reads LTLPDLGLAA…AAPGQLSARE (221 aa). Residue H1097 is the Proton acceptor; for 3-dehydroquinate dehydratase activity of the active site. Residue K1125 is the Schiff-base intermediate with substrate; for 3-dehydroquinate dehydratase activity of the active site. The shikimate dehydrogenase stretch occupies residues 1207–1538; it reads AKKFAVIGNP…YEHPVLNHSS (332 aa).

This sequence in the N-terminal section; belongs to the sugar phosphate cyclases superfamily. Dehydroquinate synthase family. It in the 2nd section; belongs to the EPSP synthase family. In the 3rd section; belongs to the shikimate kinase family. The protein in the 4th section; belongs to the type-I 3-dehydroquinase family. This sequence in the C-terminal section; belongs to the shikimate dehydrogenase family. Homodimer. It depends on Zn(2+) as a cofactor.

The protein localises to the cytoplasm. The enzyme catalyses 7-phospho-2-dehydro-3-deoxy-D-arabino-heptonate = 3-dehydroquinate + phosphate. The catalysed reaction is 3-dehydroquinate = 3-dehydroshikimate + H2O. It catalyses the reaction shikimate + NADP(+) = 3-dehydroshikimate + NADPH + H(+). It carries out the reaction shikimate + ATP = 3-phosphoshikimate + ADP + H(+). The enzyme catalyses 3-phosphoshikimate + phosphoenolpyruvate = 5-O-(1-carboxyvinyl)-3-phosphoshikimate + phosphate. It functions in the pathway metabolic intermediate biosynthesis; chorismate biosynthesis; chorismate from D-erythrose 4-phosphate and phosphoenolpyruvate: step 2/7. Its pathway is metabolic intermediate biosynthesis; chorismate biosynthesis; chorismate from D-erythrose 4-phosphate and phosphoenolpyruvate: step 3/7. It participates in metabolic intermediate biosynthesis; chorismate biosynthesis; chorismate from D-erythrose 4-phosphate and phosphoenolpyruvate: step 4/7. The protein operates within metabolic intermediate biosynthesis; chorismate biosynthesis; chorismate from D-erythrose 4-phosphate and phosphoenolpyruvate: step 5/7. It functions in the pathway metabolic intermediate biosynthesis; chorismate biosynthesis; chorismate from D-erythrose 4-phosphate and phosphoenolpyruvate: step 6/7. The AROM polypeptide catalyzes 5 consecutive enzymatic reactions in prechorismate polyaromatic amino acid biosynthesis. The protein is Pentafunctional AROM polypeptide of Ajellomyces capsulatus (strain NAm1 / WU24) (Darling's disease fungus).